The chain runs to 233 residues: MPSSAHLQDAPPLLSRTLTQDEEQTSLRQSSSCGLSAASASESLSGSTKSRIPHSKMLQGNLPRIISPESPAKLPCCYGVIMVLSVAVVALSVALSVKKTPQILTVKTYAACPRNWIGVGNKCYYFNETPSNWTFSQTLCKAQEAELARFDTEEELNFLKRHKGSSGYWIGLHRESSSQPWKWTDNTAYNNLVPIGGDEKHGFLSDNGFSSGRGYIVRKSICSKPNSYTSQCQ.

A disordered region spans residues 1–34 (MPSSAHLQDAPPLLSRTLTQDEEQTSLRQSSSCG). Residues 1-76 (MPSSAHLQDA…SPESPAKLPC (76 aa)) are Cytoplasmic-facing. Residues 77-97 (CYGVIMVLSVAVVALSVALSV) traverse the membrane as a helical; Signal-anchor for type II membrane protein segment. Over 98-233 (KKTPQILTVK…KPNSYTSQCQ (136 aa)) the chain is Extracellular. The C-type lectin domain maps to 119–228 (VGNKCYYFNE…KSICSKPNSY (110 aa)). A glycan (N-linked (GlcNAc...) asparagine) is linked at N132.

The protein resides in the cell membrane. Functionally, lectin-type cell surface receptor. The chain is C-type lectin domain family 2 member D2 (Clec2d2) from Rattus norvegicus (Rat).